The sequence spans 76 residues: ATP synthase subunit c (76 aa).

2 helical membrane passes run 8–28 (LLAAGLAMGLGAIGPGIGVGI) and 55–75 (VAFAESIAIFALVISIVLIFV).

Belongs to the ATPase C chain family. In terms of assembly, F-type ATPases have 2 components, F(1) - the catalytic core - and F(0) - the membrane proton channel. F(1) has five subunits: alpha(3), beta(3), gamma(1), delta(1), epsilon(1). F(0) has three main subunits: a(1), b(2) and c(10-14). The alpha and beta chains form an alternating ring which encloses part of the gamma chain. F(1) is attached to F(0) by a central stalk formed by the gamma and epsilon chains, while a peripheral stalk is formed by the delta and b chains.

It is found in the cell membrane. Functionally, f(1)F(0) ATP synthase produces ATP from ADP in the presence of a proton or sodium gradient. F-type ATPases consist of two structural domains, F(1) containing the extramembraneous catalytic core and F(0) containing the membrane proton channel, linked together by a central stalk and a peripheral stalk. During catalysis, ATP synthesis in the catalytic domain of F(1) is coupled via a rotary mechanism of the central stalk subunits to proton translocation. Key component of the F(0) channel; it plays a direct role in translocation across the membrane. A homomeric c-ring of between 10-14 subunits forms the central stalk rotor element with the F(1) delta and epsilon subunits. This chain is ATP synthase subunit c, found in Dehalococcoides mccartyi (strain ATCC BAA-2266 / KCTC 15142 / 195) (Dehalococcoides ethenogenes (strain 195)).